The chain runs to 565 residues: Periplasmic trehalase (565 aa).

An N-terminal signal peptide occupies residues 1–30; sequence MKSPAPSRPQKMALIPACIFLCFAALSVQA. Substrate is bound by residues Arg152, 159-160, Asn196, 205-207, 277-279, and Gly310; these read WD, RSQ, and RPE. Active-site proton donor/acceptor residues include Asp312 and Glu496. Residue Glu511 coordinates substrate. Residues 539 to 565 are disordered; that stretch reads CDNVPATRPLSESTTQPVKQKEAEPTP.

It belongs to the glycosyl hydrolase 37 family. In terms of assembly, monomer.

Its subcellular location is the periplasm. It catalyses the reaction alpha,alpha-trehalose + H2O = alpha-D-glucose + beta-D-glucose. Its function is as follows. Provides the cells with the ability to utilize trehalose at high osmolarity by splitting it into glucose molecules that can subsequently be taken up by the phosphotransferase-mediated uptake system. The chain is Periplasmic trehalase from Escherichia coli O17:K52:H18 (strain UMN026 / ExPEC).